Reading from the N-terminus, the 407-residue chain is Indoleamine 2,3-dioxygenase 1 (407 aa).

H350 provides a ligand contact to heme b. The tract at residues 362 to 407 (SKKKPTDGDKSEEPSNVESRGTGGTNPMTFLRSVKDTTEKALLSWP) is disordered. Over residues 365-374 (KPTDGDKSEE) the composition is skewed to basic and acidic residues.

Belongs to the indoleamine 2,3-dioxygenase family. In terms of assembly, monomer. Heme b is required as a cofactor. Highly expressed in epididymis, duodemum, jejunum, ileum, colon and spleen. Highly expressed in epididymis, prostate, duodemum, jejunum, ileum, colon and spleen, not detected in the liver (at protein level). Expressed in tumors only upon exposure to IFN gamma. Constitutively expressed in placenta in trophoblast cells. Expression is restricted to perinuclear regions of primary trophoblast giant cells (TGCs) of fetal origin at mid-gestation (10.5 dpc). After placentation (14 dpc), no IDO expression was detected at the maternal-fetal interface.

Its subcellular location is the cytoplasm. It is found in the cytosol. The enzyme catalyses D-tryptophan + O2 = N-formyl-D-kynurenine. It catalyses the reaction L-tryptophan + O2 = N-formyl-L-kynurenine. Activity is inhibited by and MTH-trp (methylthiohydantoin-DL-tryptophan), modestly inhibited by L-1MT (1-methyl-L-tryptophan) but not D-1MT (1-methyl-D-tryptophan). Catalyzes the first and rate limiting step of the catabolism of the essential amino acid tryptophan along the kynurenine pathway. Involved in the peripheral immune tolerance, contributing to maintain homeostasis by preventing autoimmunity or immunopathology that would result from uncontrolled and overreacting immune responses. Tryptophan shortage inhibits T lymphocytes division and accumulation of tryptophan catabolites induces T-cell apoptosis and differentiation of regulatory T-cells. Acts as a suppressor of anti-tumor immunity. Limits the growth of intracellular pathogens by depriving tryptophan. Protects the fetus from maternal immune rejection. The sequence is that of Indoleamine 2,3-dioxygenase 1 from Mus musculus (Mouse).